A 584-amino-acid polypeptide reads, in one-letter code: MASVQASRRQWCYLCDLPKMPWAMVWDFSEAVCRGCVNFEGADRIELLIDAARQLKRSHVLPEGRSPGPPALKHPTSKDLASTGSQGSQLPPPQAQAQPSGTGGSVSGPDRYDRATSSSRLALPSPALEYTLGSRLANGLGREEAVAEGARRALLGSIPSLMPPGLLAAAVSGLGGRALTLAPGLSPARPLFGSDFEKEKQQRNADCLAELNEAMRGRAEEWHGRPKAVREQLLALSACAPFNVRFKKDHGLVGRVFAFDATARPPGYEFELKLFTEYPCGSGNVYAGVLAVARQMFHDALREPGKALASSGFKYLEYERRHGSGEWRQLGELLTDGVRSFREPAPAEALPQQYPEPAPAALCGPPPRAPSRNLAPTPRRRKASPEPEGETAGKMTTEEQQQRHWVAPGGPYSSETPGVPSPIAALKNVAEALGHSPKDPGGGGGSVRAGGASPAASSTTQPPAQHRLVARNGEAEVSPTAGAEAVSGGGSGTGATPGAPLCCTLCRERLEDTHFVQCPSVPGHKFCFPCSREFIKAQGPAGEVYCPSGDKCPLVGSSVPWAFMQGEIATILAGDIKVKKERDP.

The tract at residues 59–120 (HVLPEGRSPG…RYDRATSSSR (62 aa)) is disordered. Phosphoserine is present on Ser-66. Over residues 82–100 (STGSQGSQLPPPQAQAQPS) the composition is skewed to low complexity. The residue at position 125 (Ser-125) is a Phosphoserine. The residue at position 177 (Arg-177) is an Omega-N-methylarginine. The residue at position 186 (Ser-186) is a Phosphoserine. Residues 197–217 (EKEKQQRNADCLAELNEAMRG) adopt a coiled-coil conformation. Residue Lys-227 forms a Glycyl lysine isopeptide (Lys-Gly) (interchain with G-Cter in SUMO2) linkage. Disordered stretches follow at residues 346 to 421 (PAEA…GVPS) and 433 to 495 (LGHS…GTGA). Residues 354-369 (YPEPAPAALCGPPPRA) show a composition bias toward pro residues. A phosphoserine mark is found at Ser-371, Ser-384, Ser-421, and Ser-436. A Glycyl lysine isopeptide (Lys-Gly) (interchain with G-Cter in SUMO2) cross-link involves residue Lys-438. The segment covering 449–458 (AGGASPAASS) has biased composition (low complexity). A phosphoserine mark is found at Ser-453 and Ser-457. An RING-type; degenerate zinc finger spans residues 503–550 (CTLCRERLEDTHFVQCPSVPGHKFCFPCSREFIKAQGPAGEVYCPSGD). Residues 503–550 (CTLCRERLEDTHFVQCPSVPGHKFCFPCSREFIKAQGPAGEVYCPSGD) are cys-rich.

It belongs to the IRF2BP family. Interacts with IRF2. Part of a corepressor complex containing IRF2 and IRF2BP2. Interacts with JDP2.

The protein localises to the nucleus. The catalysed reaction is S-ubiquitinyl-[E2 ubiquitin-conjugating enzyme]-L-cysteine + [acceptor protein]-L-lysine = [E2 ubiquitin-conjugating enzyme]-L-cysteine + N(6)-ubiquitinyl-[acceptor protein]-L-lysine.. Acts as a transcriptional corepressor in a IRF2-dependent manner; this repression is not mediated by histone deacetylase activities. May act as an E3 ligase towards JDP2, enhancing its polyubiquitination. Represses ATF2-dependent transcriptional activation. This Mus musculus (Mouse) protein is Interferon regulatory factor 2-binding protein 1 (Irf2bp1).